The chain runs to 266 residues: MQRFLLPLLFLALSPPAICHYSSSTSSPSSSSVSSDASEWRPARATYYAATNPRDAVGGACGYGDLVKSGYGMATVGLSETLFERGQICGACFELRCVDDLRWCIPGTSIILTATNFCAPNYGFDPDGGGHCNPPNKHFVLPIEAFEKIAIWKAGNMPVQYRRINCRKEGSMRFTVDGGGIFISVLITNVAGSGDIAAVKIKGSRTGWLPMGRNWGQNWHINADLRNQALSFEVTSSDRSTVTSYNVSPKNWNYGQTFEGKQFETP.

A signal peptide spans 1–19 (MQRFLLPLLFLALSPPAIC). The Expansin-like EG45 domain occupies 58–171 (GGACGYGDLV…RRINCRKEGS (114 aa)). Residues 181-260 (IFISVLITNV…NWNYGQTFEG (80 aa)) form the Expansin-like CBD domain.

Belongs to the expansin family. Expansin A subfamily.

The protein localises to the secreted. Its subcellular location is the cell wall. It is found in the membrane. In terms of biological role, causes loosening and extension of plant cell walls by disrupting non-covalent bonding between cellulose microfibrils and matrix glucans. No enzymatic activity has been found. In Arabidopsis thaliana (Mouse-ear cress), this protein is Expansin-A13 (EXPA13).